Reading from the N-terminus, the 673-residue chain is Bifunctional polymyxin resistance protein ArnA (673 aa).

The interval 1–311 (MKAIVFAYHD…EMGMVPQARL (311 aa)) is formyltransferase ArnAFT. Residue H104 is the Proton donor; for formyltransferase activity of the active site. (6R)-10-formyltetrahydrofolate is bound by residues R114 and 136-140 (VSRAD). A dehydrogenase ArnADH region spans residues 321–673 (RRTRVLILGV…HTADATDTQG (353 aa)). NAD(+) contacts are provided by residues D354 and 375–376 (DI). UDP-alpha-D-glucuronate contacts are provided by residues A400, Y405, and 439-440 (TS). Catalysis depends on E441, which acts as the Proton acceptor; for decarboxylase activity. Residues R467, N499, 533 to 542 (KLVDGGAQKR), and Y620 each bind UDP-alpha-D-glucuronate. The Proton donor; for decarboxylase activity role is filled by R626.

In the N-terminal section; belongs to the Fmt family. UDP-L-Ara4N formyltransferase subfamily. This sequence in the C-terminal section; belongs to the NAD(P)-dependent epimerase/dehydratase family. UDP-glucuronic acid decarboxylase subfamily. Homohexamer, formed by a dimer of trimers.

The enzyme catalyses UDP-alpha-D-glucuronate + NAD(+) = UDP-beta-L-threo-pentopyranos-4-ulose + CO2 + NADH. It catalyses the reaction UDP-4-amino-4-deoxy-beta-L-arabinose + (6R)-10-formyltetrahydrofolate = UDP-4-deoxy-4-formamido-beta-L-arabinose + (6S)-5,6,7,8-tetrahydrofolate + H(+). It functions in the pathway nucleotide-sugar biosynthesis; UDP-4-deoxy-4-formamido-beta-L-arabinose biosynthesis; UDP-4-deoxy-4-formamido-beta-L-arabinose from UDP-alpha-D-glucuronate: step 1/3. Its pathway is nucleotide-sugar biosynthesis; UDP-4-deoxy-4-formamido-beta-L-arabinose biosynthesis; UDP-4-deoxy-4-formamido-beta-L-arabinose from UDP-alpha-D-glucuronate: step 3/3. It participates in bacterial outer membrane biogenesis; lipopolysaccharide biosynthesis. Bifunctional enzyme that catalyzes the oxidative decarboxylation of UDP-glucuronic acid (UDP-GlcUA) to UDP-4-keto-arabinose (UDP-Ara4O) and the addition of a formyl group to UDP-4-amino-4-deoxy-L-arabinose (UDP-L-Ara4N) to form UDP-L-4-formamido-arabinose (UDP-L-Ara4FN). The modified arabinose is attached to lipid A and is required for resistance to polymyxin and cationic antimicrobial peptides. The protein is Bifunctional polymyxin resistance protein ArnA of Pectobacterium atrosepticum (strain SCRI 1043 / ATCC BAA-672) (Erwinia carotovora subsp. atroseptica).